Here is a 127-residue protein sequence, read N- to C-terminus: Small ribosomal subunit protein bS6 (127 aa).

Belongs to the bacterial ribosomal protein bS6 family.

In terms of biological role, binds together with bS18 to 16S ribosomal RNA. The chain is Small ribosomal subunit protein bS6 from Sulfurovum sp. (strain NBC37-1).